The chain runs to 351 residues: Glycerol-3-phosphate dehydrogenase [NAD(P)+] (351 aa).

NADPH is bound by residues S18, W19, R38, and K122. Residues K122, G153, and S155 each contribute to the sn-glycerol 3-phosphate site. NADPH is bound at residue A157. Sn-glycerol 3-phosphate contacts are provided by K208, D261, S271, R272, and N273. K208 acts as the Proton acceptor in catalysis. R272 lines the NADPH pocket. E297 contributes to the NADPH binding site.

The protein belongs to the NAD-dependent glycerol-3-phosphate dehydrogenase family.

Its subcellular location is the cytoplasm. The catalysed reaction is sn-glycerol 3-phosphate + NAD(+) = dihydroxyacetone phosphate + NADH + H(+). The enzyme catalyses sn-glycerol 3-phosphate + NADP(+) = dihydroxyacetone phosphate + NADPH + H(+). It participates in membrane lipid metabolism; glycerophospholipid metabolism. In terms of biological role, catalyzes the reduction of the glycolytic intermediate dihydroxyacetone phosphate (DHAP) to sn-glycerol 3-phosphate (G3P), the key precursor for phospholipid synthesis. The chain is Glycerol-3-phosphate dehydrogenase [NAD(P)+] from Bordetella parapertussis (strain 12822 / ATCC BAA-587 / NCTC 13253).